A 303-amino-acid polypeptide reads, in one-letter code: Rhomboid-related protein 2 (303 aa).

The tract at residues 20–39 (MKEELEEEEKMREDGGGKDR) is disordered. Residues 28-39 (EKMREDGGGKDR) show a composition bias toward basic and acidic residues. 7 helical membrane passes run 72-92 (PVFI…YAVW), 128-148 (LVHA…VLGI), 159-179 (VGLV…IFDP), 183-203 (LVGA…NVLV), 212-232 (FGIF…GFAL), 245-265 (VSFA…YTVF), and 278-298 (FWIA…FNIF). The active-site Nucleophile is the serine 187. Histidine 250 is an active-site residue.

The protein belongs to the peptidase S54 family. Proteolytic processing of the proenzyme produces a N-terminal fragment (NTF) and a C-terminal fragment (CTF). The processing is required for activation of the protease.

The protein resides in the cell membrane. It catalyses the reaction Cleaves type-1 transmembrane domains using a catalytic dyad composed of serine and histidine that are contributed by different transmembrane domains.. Involved in regulated intramembrane proteolysis and the subsequent release of functional polypeptides from their membrane anchors. Known substrate: EFNB3. This is Rhomboid-related protein 2 (RHBDL2) from Homo sapiens (Human).